The chain runs to 129 residues: Small ribosomal subunit protein uS11 (129 aa).

It belongs to the universal ribosomal protein uS11 family. As to quaternary structure, part of the 30S ribosomal subunit. Interacts with proteins S7 and S18. Binds to IF-3.

In terms of biological role, located on the platform of the 30S subunit, it bridges several disparate RNA helices of the 16S rRNA. Forms part of the Shine-Dalgarno cleft in the 70S ribosome. The chain is Small ribosomal subunit protein uS11 from Macrococcus caseolyticus (strain JCSC5402) (Macrococcoides caseolyticum).